A 136-amino-acid chain; its full sequence is Histone H3 (136 aa).

Residues 1 to 42 are disordered; that stretch reads MARTKQTARKSTGGKAPRKQLATKAAAKSAPATGGVKKPHRY. The residue at position 5 (lysine 5) is an N6-methylated lysine. Position 10 is an N6-acetyllysine; alternate (lysine 10). Lysine 10 bears the N6-methylated lysine; alternate mark. Residue serine 11 is modified to Phosphoserine. 2 positions are modified to N6-acetyllysine: lysine 15 and lysine 24. Positions 22-33 are enriched in low complexity; it reads ATKAAAKSAPAT. 3 positions are modified to N6-methylated lysine: lysine 28, lysine 37, and lysine 80.

The protein belongs to the histone H3 family. The nucleosome is a histone octamer containing two molecules each of H2A, H2B, H3 and H4 assembled in one H3-H4 heterotetramer and two H2A-H2B heterodimers. The octamer wraps approximately 147 bp of DNA. In terms of processing, acetylation is generally linked to gene activation. Post-translationally, methylation at Lys-5 is linked to gene activation. Methylation at Lys-10 is linked to gene repression.

The protein localises to the nucleus. Its subcellular location is the chromosome. Functionally, core component of nucleosome. Nucleosomes wrap and compact DNA into chromatin, limiting DNA accessibility to the cellular machineries which require DNA as a template. Histones thereby play a central role in transcription regulation, DNA repair, DNA replication and chromosomal stability. DNA accessibility is regulated via a complex set of post-translational modifications of histones, also called histone code, and nucleosome remodeling. This Acropora formosa (Staghorn coral) protein is Histone H3.